The following is a 290-amino-acid chain: Nucleotide-binding protein BAV3158 (290 aa).

9-16 (GISGSGKS) contacts ATP. 58–61 (DVRS) lines the GTP pocket.

The protein belongs to the RapZ-like family.

Its function is as follows. Displays ATPase and GTPase activities. The chain is Nucleotide-binding protein BAV3158 from Bordetella avium (strain 197N).